The following is a 427-amino-acid chain: MFFTCGPNEAMVVSGFCRSPPVMVAGGRVFVLPCIQQIQRISLNTLTLNVKSEKVYTRHGVPISVTGIAQVKIQGQNKEMLAAACQMFLGKTEAEIAHIALETLEGHQRAIMAHMTVEEIYKDRQKFSEQVFKVASSDLVNMGISVVSYTLKDIHDDQDYLHSLGKARTAQVQKDARIGEAEAKRDAGIREAKAKQEKVSAQYLSEIEMAKAQRDYELKKAAYDIEVNTRRAQADLAYQLQVAKTKQQIEEQRVQVQVVERAQQVAVQEQEIARREKELEARVRKPAEAERYKLERLAAAEKSQLIMQAEAEAESVRMRGEAEAFAIGARARAEAEQMAKKAEAFQLYQEAAQLDMLLEKLPQVAEEISGPLTSAKKITLVSSGSGTMGAAKVTGEVLDILSRLPESVERLTGVSISQVNHKPLRTA.

Residues Ser-19, Ser-163, and Ser-385 each carry the phosphoserine modification. A Phosphothreonine modification is found at Thr-387.

Belongs to the band 7/mec-2 family. Flotillin subfamily. Heterooligomeric complex of flotillin-1 and flotillin-2 and caveolin-1 and caveolin-2. Interacts with ECPAS.

Its subcellular location is the cell membrane. The protein resides in the endosome. It localises to the membrane. It is found in the caveola. The protein localises to the melanosome. Its subcellular location is the membrane raft. May act as a scaffolding protein within caveolar membranes, functionally participating in formation of caveolae or caveolae-like vesicles. This is Flotillin-1 (FLOT1) from Sus scrofa (Pig).